We begin with the raw amino-acid sequence, 654 residues long: Translation factor GUF1, mitochondrial (654 aa).

The region spanning 57–237 (ENYRNFSIVA…SVIKNIPSPV (181 aa)) is the tr-type G domain. Residues 66-73 (AHVDHGKS), 130-134 (DTPGH), and 184-187 (NKID) contribute to the GTP site.

It belongs to the TRAFAC class translation factor GTPase superfamily. Classic translation factor GTPase family. LepA subfamily.

The protein resides in the mitochondrion inner membrane. It carries out the reaction GTP + H2O = GDP + phosphate + H(+). Promotes mitochondrial protein synthesis. May act as a fidelity factor of the translation reaction, by catalyzing a one-codon backward translocation of tRNAs on improperly translocated ribosomes. Binds to mitochondrial ribosomes in a GTP-dependent manner. This Candida albicans (strain SC5314 / ATCC MYA-2876) (Yeast) protein is Translation factor GUF1, mitochondrial.